We begin with the raw amino-acid sequence, 200 residues long: HTH-type transcriptional repressor KstR2 (200 aa).

Positions 9–69 constitute an HTH tetR-type domain; sequence NSRRGELLEL…ELLRGFLDWL (61 aa). The H-T-H motif DNA-binding region spans 32–51; sequence TVRDIADGAGILSGSLYHHF.

As to quaternary structure, homodimer.

In terms of biological role, controls the expression of a small regulon that may play a role in the utilization of cholesterol. This chain is HTH-type transcriptional repressor KstR2 (kstR2), found in Mycobacterium tuberculosis (strain CDC 1551 / Oshkosh).